A 48-amino-acid polypeptide reads, in one-letter code: Small, acid-soluble spore protein N (48 aa).

A disordered region spans residues 1–48 (MMGREHDKQAQFTPDHLGTKPVAYKRNKGKKMHNKSNEQPDVIQTKGE). Residues 23–34 (AYKRNKGKKMHN) are compositionally biased toward basic residues.

Belongs to the SspN family.

The protein resides in the spore core. The polypeptide is Small, acid-soluble spore protein N (Bacillus pumilus (strain SAFR-032)).